Here is a 30-residue protein sequence, read N- to C-terminus: uncharacterized protein (30 aa).

The disordered stretch occupies residues 1–30 (MHLSTLPNVPWPNRSFTTKRPPLPNMSFSW).

This is an uncharacterized protein from Saccharomyces cerevisiae (strain ATCC 204508 / S288c) (Baker's yeast).